Here is a 517-residue protein sequence, read N- to C-terminus: General transcription factor IIF subunit 1 (517 aa).

Ala-2 carries the post-translational modification N-acetylalanine. Thr-156 bears the Phosphothreonine mark. Residues 178–458 (QQRRLKDQDQ…SGDVQVTEDA (281 aa)) form a disordered region. The span at 210–225 (LEDDLEMSSDDSEASG) shows a compositional bias: acidic residues. Phosphoserine is present on residues Ser-217, Ser-218, Ser-221, and Ser-224. Residues 232–251 (PKAKKKAPPSKGGRKKKKKK) are compositionally biased toward basic residues. Composition is skewed to acidic residues over residues 255-270 (DEAF…EGQE) and 303-325 (EQSE…EEEE). Residue Thr-331 is modified to Phosphothreonine. Residues 343–355 (EESDSSEESDIDS) are compositionally biased toward acidic residues. Residues 364–374 (AKKKTPPKRER) show a composition bias toward basic residues. 4 positions are modified to phosphoserine: Ser-377, Ser-380, Ser-381, and Ser-385. Residues 377–391 (SGGSSRGNSRPGTPS) show a composition bias toward low complexity. Residue Thr-389 is modified to Phosphothreonine. Ser-391 is modified (phosphoserine). A compositionally biased stretch (polar residues) spans 392-401 (TEAGSTSSTL). An N6-acetyllysine modification is found at Lys-407. Positions 428–452 (GPQSLSGKSTPQPQSGKSTPSSGDV) are enriched in polar residues. 3 positions are modified to phosphoserine: Ser-431, Ser-433, and Ser-436. Residues Thr-437 and Thr-446 each carry the phosphothreonine modification. Residue Ser-449 is modified to Phosphoserine.

The protein belongs to the TFIIF alpha subunit family. As to quaternary structure, heterodimer of an alpha and a beta subunit. Interacts with GTF2F2, CTDP1, TAF6/TAFII80 and URI1. Interacts with GTF2B (via C-terminus and preferentially via acetylated form); this interaction prevents binding of GTF2B to GTF2F2. Part of TBP-based Pol II pre-initiation complex (PIC), in which Pol II core assembles with general transcription factors and other specific initiation factors including GTF2E1, GTF2E2, GTF2F1, GTF2F2, TCEA1, ERCC2, ERCC3, GTF2H2, GTF2H3, GTF2H4, GTF2H5, GTF2A1, GTF2A2, GTF2B and TBP; this large multi-subunit PIC complex mediates DNA unwinding and targets Pol II core to the transcription start site where the first phosphodiester bond forms. In terms of processing, phosphorylated on Ser and other residues by TAF1 and casein kinase II-like kinases.

It is found in the nucleus. Functionally, TFIIF is a general transcription initiation factor that binds to RNA polymerase II and helps to recruit it to the initiation complex in collaboration with TFIIB. It promotes transcription elongation. The polypeptide is General transcription factor IIF subunit 1 (GTF2F1) (Bos taurus (Bovine)).